We begin with the raw amino-acid sequence, 103 residues long: Small ribosomal subunit protein uS10 (103 aa).

It belongs to the universal ribosomal protein uS10 family. As to quaternary structure, part of the 30S ribosomal subunit.

Its function is as follows. Involved in the binding of tRNA to the ribosomes. This Hydrogenovibrio crunogenus (strain DSM 25203 / XCL-2) (Thiomicrospira crunogena) protein is Small ribosomal subunit protein uS10.